A 403-amino-acid polypeptide reads, in one-letter code: Queuine tRNA-ribosyltransferase catalytic subunit 1 (403 aa).

Alanine 2 carries the N-acetylalanine modification. The Proton acceptor role is filled by aspartate 105. Position 105-109 (105-109) interacts with queuine; it reads DSGGF. Serine 139 is modified (phosphoserine). Queuine-binding residues include aspartate 159, glutamine 202, and glycine 229. An RNA binding region spans residues 260-266; that stretch reads GVGYATD. The Nucleophile role is filled by aspartate 279. Positions 284-288 are RNA binding; important for wobble base 34 recognition; the sequence is TRTAR. Zn(2+) contacts are provided by cysteine 317, cysteine 319, cysteine 322, and histidine 348.

Belongs to the queuine tRNA-ribosyltransferase family. In terms of assembly, heterodimer of a catalytic subunit QTRT1 and an accessory subunit QTRT2. Requires Zn(2+) as cofactor.

Its subcellular location is the cytoplasm. It localises to the mitochondrion outer membrane. The enzyme catalyses guanosine(34) in tRNA + queuine = queuosine(34) in tRNA + guanine. In terms of biological role, catalytic subunit of the queuine tRNA-ribosyltransferase (TGT) that catalyzes the base-exchange of a guanine (G) residue with queuine (Q) at position 34 (anticodon wobble position) in tRNAs with GU(N) anticodons (tRNA-Asp, -Asn, -His and -Tyr), resulting in the hypermodified nucleoside queuosine (7-(((4,5-cis-dihydroxy-2-cyclopenten-1-yl)amino)methyl)-7-deazaguanosine). Catalysis occurs through a double-displacement mechanism. The nucleophile active site attacks the C1' of nucleotide 34 to detach the guanine base from the RNA, forming a covalent enzyme-RNA intermediate. The proton acceptor active site deprotonates the incoming queuine, allowing a nucleophilic attack on the C1' of the ribose to form the product. This is Queuine tRNA-ribosyltransferase catalytic subunit 1 from Rattus norvegicus (Rat).